Reading from the N-terminus, the 296-residue chain is D-alanine--D-alanine ligase (296 aa).

An ATP-grasp domain is found at 99–292; sequence TYRVLDGYVN…FEELVDAIIQ (194 aa). ATP is bound at residue 125-176; the sequence is GFPCVIKPRKEGSSIGVHICDNSNQLYNDLSEELKKYNEMMIQRYIEGRELT. Residues Asp-247, Glu-259, and Asn-261 each coordinate Mg(2+).

The protein belongs to the D-alanine--D-alanine ligase family. Mg(2+) serves as cofactor. Mn(2+) is required as a cofactor.

It is found in the cytoplasm. The catalysed reaction is 2 D-alanine + ATP = D-alanyl-D-alanine + ADP + phosphate + H(+). It functions in the pathway cell wall biogenesis; peptidoglycan biosynthesis. Its function is as follows. Cell wall formation. The protein is D-alanine--D-alanine ligase of Pseudothermotoga lettingae (strain ATCC BAA-301 / DSM 14385 / NBRC 107922 / TMO) (Thermotoga lettingae).